The sequence spans 293 residues: Acetylglutamate kinase (293 aa).

Substrate is bound by residues 70–71 (GG), arginine 92, and asparagine 186.

This sequence belongs to the acetylglutamate kinase family. ArgB subfamily.

It localises to the cytoplasm. The enzyme catalyses N-acetyl-L-glutamate + ATP = N-acetyl-L-glutamyl 5-phosphate + ADP. It functions in the pathway amino-acid biosynthesis; L-arginine biosynthesis; N(2)-acetyl-L-ornithine from L-glutamate: step 2/4. In terms of biological role, catalyzes the ATP-dependent phosphorylation of N-acetyl-L-glutamate. The sequence is that of Acetylglutamate kinase from Parasynechococcus marenigrum (strain WH8102).